Consider the following 237-residue polypeptide: MIVIPAIDIIDGKCVRLTQGDYSRVQEYNLDPVQQAKYFEKEGARYLHVVDLDGAKKGSPVNFEVIKRIKESTSLSVECGGGIRDKKTINDYLLAGIDYIILGSVIFKNPEFVEDVLKRFGNERFIASLDFEEGYVKLSGWQEATRISVEEGILHIKKLGFQKLIYTDIKTDGMLKGHNFEAAKYIRSLFDGFLISSGGISSMNDVLKLKDIGVDGVIIGKALYTGHVKLNEIINLV.

Residue D8 is the Proton acceptor of the active site. The active-site Proton donor is D130.

This sequence belongs to the HisA/HisF family.

It is found in the cytoplasm. The enzyme catalyses 1-(5-phospho-beta-D-ribosyl)-5-[(5-phospho-beta-D-ribosylamino)methylideneamino]imidazole-4-carboxamide = 5-[(5-phospho-1-deoxy-D-ribulos-1-ylimino)methylamino]-1-(5-phospho-beta-D-ribosyl)imidazole-4-carboxamide. It functions in the pathway amino-acid biosynthesis; L-histidine biosynthesis; L-histidine from 5-phospho-alpha-D-ribose 1-diphosphate: step 4/9. The protein is 1-(5-phosphoribosyl)-5-[(5-phosphoribosylamino)methylideneamino] imidazole-4-carboxamide isomerase of Caldicellulosiruptor saccharolyticus (strain ATCC 43494 / DSM 8903 / Tp8T 6331).